The following is a 116-amino-acid chain: M-zodatoxin-Lt6a/b (116 aa).

Residues 1–22 (MKYFVVALTLAVAFVCIEECKT) form the signal peptide. 2 consecutive propeptides follow at residues 23–44 (VEIG…EEAR) and 80–83 (EEAR). 2 consecutive short sequence motifs (processing quadruplet motif) follow at residues 41–44 (EEAR) and 80–83 (EEAR). Position 84 is a pyrrolidone carboxylic acid (Gln84).

Belongs to the cationic peptide 03 (latarcin) family. 06 subfamily. Post-translationally, cleavage of the propeptide depends on the processing quadruplet motif (XXXR, with at least one of X being E). Expressed by the venom gland.

Its subcellular location is the secreted. Does not have antimicrobial activity against neither Gram-positive bacteria (A.globiformis VKM Ac-1112 (MIC&gt;70 uM), and B.subtilis VKM B-501 (MIC&gt;70 uM)), nor Gram-negative bacteria (E.coli DH5-alpha (MIC&gt;70 uM), E.coli MH1 (MIC&gt;70 uM), and P.aeruginosa PAO1 (MIC&gt;70 uM)), nor yeasts (P.pastoris GS115 (MIC&gt;70 uM), and S.cerevisiae Y190 (MIC&gt;70 uM)). Does not have hemolytic activity against rabbit erythrocytes. However, it causes some conductance changes in planar bilayer membranes, without membrane rupture, suggesting a cytolytic function on other biological targets. It causes paralysis, but is not lethal when injected into insect (M.domestica) larvae. The chain is M-zodatoxin-Lt6a/b from Lachesana tarabaevi (Spider).